A 114-amino-acid polypeptide reads, in one-letter code: MTRVKRGNVSRKRHKKVLNLTKGFRGAASLLFRTANQQNMKALRYSYANRRKKKRNFRRLWITRVNAAIRAYGFNYSEFLYVLKNSNILLNRKILAQLAICDPDTFFKFIMSIQ.

The protein belongs to the bacterial ribosomal protein bL20 family.

The protein resides in the plastid. Its subcellular location is the chloroplast. Its function is as follows. Binds directly to 23S ribosomal RNA and is necessary for the in vitro assembly process of the 50S ribosomal subunit. It is not involved in the protein synthesizing functions of that subunit. The polypeptide is Large ribosomal subunit protein bL20c (Tetradesmus obliquus (Green alga)).